Here is a 506-residue protein sequence, read N- to C-terminus: Chorion-specific transcription factor GCMb (506 aa).

Positions Leu19 to Ala174 form a DNA-binding region, GCM. Zn(2+) is bound by residues Cys81, Cys87, Cys91, Cys118, Cys121, Cys130, His157, and His159. Residues Gly155–Arg172 are compositionally biased toward basic and acidic residues. The segment at Gly155 to Asn213 is disordered. Residues Leu379–Gln395 form a C-terminal conserved inhibitory domain (CCID) region.

The protein resides in the nucleus. Its function is as follows. Transcription factor that binds specific sequences on gene promoters and activate their transcription. Through the regulation of gene transcription, may play a role in parathyroid gland development. This Homo sapiens (Human) protein is Chorion-specific transcription factor GCMb.